Here is a 147-residue protein sequence, read N- to C-terminus: ATP synthase epsilon chain (147 aa).

The protein belongs to the ATPase epsilon chain family. As to quaternary structure, F-type ATPases have 2 components, CF(1) - the catalytic core - and CF(0) - the membrane proton channel. CF(1) has five subunits: alpha(3), beta(3), gamma(1), delta(1), epsilon(1). CF(0) has three main subunits: a, b and c.

It localises to the cell inner membrane. Functionally, produces ATP from ADP in the presence of a proton gradient across the membrane. The chain is ATP synthase epsilon chain from Protochlamydia amoebophila (strain UWE25).